The sequence spans 1876 residues: Phenolphthiocerol/phthiocerol polyketide synthase subunit A (1876 aa).

The region spanning 9 to 83 (ADLRHWLIDY…ALAAYLAAPE (75 aa)) is the Carrier 1 domain. Ser43 carries the post-translational modification O-(pantetheine 4'-phosphoryl)serine. The 426-residue stretch at 101 to 526 (DEPIAVVGMG…GTNAHVVIEQ (426 aa)) folds into the Ketosynthase family 3 (KS3) domain. Active-site for beta-ketoacyl synthase activity residues include Cys273, His408, and His448. Residues 626-950 (SPGPGTVFVY…NLNKAHTIHP (325 aa)) are acyltransferase. Ser720 serves as the catalytic For malonyltransferase activity. An N-terminal hotdog fold region spans residues 997–1112 (HTTVATVSAS…AQLSSSPSDS (116 aa)). Positions 997–1267 (HTTVATVSAS…YRALDFGLDV (271 aa)) constitute a PKS/mFAS DH domain. His1027 acts as the Proton acceptor; for dehydratase activity in catalysis. The disordered stretch occupies residues 1102–1130 (TAQLSSSPSDSASSLNEHHRANGQPPERA). Residues 1106–1115 (SSSPSDSASS) show a composition bias toward low complexity. Residues 1130–1267 (AHRDLIPDLA…YRALDFGLDV (138 aa)) form a C-terminal hotdog fold region. Asp1186 serves as the catalytic Proton donor; for dehydratase activity. 1491 to 1551 (AAYLITGGLG…RRRIDAIRAL (61 aa)) is an NADP(+) binding site. The beta-ketoacyl reductase stretch occupies residues 1491–1728 (AAYLITGGLG…DGYDVAQAVV (238 aa)). In terms of domain architecture, Carrier 2 spans 1759 to 1836 (EVRSELEQGL…SLASYLAKRV (78 aa)). Ser1796 is modified (O-(pantetheine 4'-phosphoryl)serine).

The cofactor is NADP(+). Pantetheine 4'-phosphate serves as cofactor.

The catalysed reaction is icosanoyl-[(phenol)carboxyphthiodiolenone synthase] + 2 (S)-methylmalonyl-CoA + 3 malonyl-CoA + 5 NADPH + 10 H(+) = C32-carboxyphthiodiolenone-[(phenol)carboxyphthiodiolenone synthase] + 5 CO2 + 5 NADP(+) + 5 CoA + 2 H2O. It catalyses the reaction docosanoyl-[(phenol)carboxyphthiodiolenone synthase] + 2 (S)-methylmalonyl-CoA + 3 malonyl-CoA + 5 NADPH + 10 H(+) = C34-carboxyphthiodiolenone-[(phenol)carboxyphthiodiolenone synthase] + 5 CO2 + 5 NADP(+) + 5 CoA + 2 H2O. It carries out the reaction 17-(4-hydroxyphenyl)heptadecanoyl-[(phenol)carboxyphthiodiolenone synthase] + 2 (S)-methylmalonyl-CoA + 3 malonyl-CoA + 5 NADPH + 10 H(+) = C35-(phenol)carboxyphthiodiolenone-[(phenol)carboxyphthiodiolenone synthase] + 5 CO2 + 5 NADP(+) + 5 CoA + 2 H2O. The enzyme catalyses 19-(4-hydroxyphenyl)nonadecanoyl-[(phenol)carboxyphthiodiolenone synthase] + 2 (S)-methylmalonyl-CoA + 3 malonyl-CoA + 5 NADPH + 10 H(+) = C37-(phenol)carboxyphthiodiolenone-[(phenol)carboxyphthiodiolenone synthase] + 5 CO2 + 5 NADP(+) + 5 CoA + 2 H2O. It functions in the pathway lipid metabolism; fatty acid biosynthesis. In terms of biological role, part of the PpsABCDE complex involved in the biosynthesis of the lipid core common to phthiocerols and phenolphthiocerols by successive additions of malonyl-CoA or methylmalonyl-CoA extender units. PpsA can accept as substrate the activated forms of either icosanoyl (C20), docosanoyl (C22) or lignoceroyl (C24) groups from FadD26, or a (4-hydroxyphenyl)-C17 or (4-hydroxyphenyl)-C19 fatty acyl from FadD29. PpsA initiates the biosynthesis and extends its substrate using a malonyl-CoA extender unit. The PpsB and PpsC proteins add the second and third malonyl-CoA extender units. PpsD adds an (R)-methylmalonyl unit and PpsE adds a second (R)-methylmalonyl unit. The incorporation of the methylmalonyl units results in formation of two branched methyl groups in the elongated product. The protein is Phenolphthiocerol/phthiocerol polyketide synthase subunit A (ppsA) of Mycobacterium tuberculosis (strain CDC 1551 / Oshkosh).